Reading from the N-terminus, the 540-residue chain is Light-independent protochlorophyllide reductase subunit B (540 aa).

Aspartate 36 lines the [4Fe-4S] cluster pocket. The Proton donor role is filled by aspartate 292. 428–429 (GL) is a substrate binding site. Residues 451–490 (SNVASGVEPSTPSVSSEVSASSSASPEASAPTPSPDGDMV) form a disordered region. Positions 457–481 (VEPSTPSVSSEVSASSSASPEASAP) are enriched in low complexity.

It belongs to the ChlB/BchB/BchZ family. As to quaternary structure, protochlorophyllide reductase is composed of three subunits; BchL, BchN and BchB. Forms a heterotetramer of two BchB and two BchN subunits. The cofactor is [4Fe-4S] cluster.

It carries out the reaction chlorophyllide a + oxidized 2[4Fe-4S]-[ferredoxin] + 2 ADP + 2 phosphate = protochlorophyllide a + reduced 2[4Fe-4S]-[ferredoxin] + 2 ATP + 2 H2O. The protein operates within porphyrin-containing compound metabolism; bacteriochlorophyll biosynthesis (light-independent). Component of the dark-operative protochlorophyllide reductase (DPOR) that uses Mg-ATP and reduced ferredoxin to reduce ring D of protochlorophyllide (Pchlide) to form chlorophyllide a (Chlide). This reaction is light-independent. The NB-protein (BchN-BchB) is the catalytic component of the complex. This is Light-independent protochlorophyllide reductase subunit B from Chlorobium chlorochromatii (strain CaD3).